A 424-amino-acid polypeptide reads, in one-letter code: Zinc metalloproteinase-disintegrin-like brevilysin H2a (424 aa).

Glutamine 1 is subject to Pyrrolidone carboxylic acid. A Peptidase M12B domain is found at 9 to 207 (RYVKLAIVAD…YKPQCILNEP (199 aa)). Residue asparagine 69 is glycosylated (N-linked (GlcNAc...) asparagine). Aspartate 96 provides a ligand contact to Ca(2+). 3 cysteine pairs are disulfide-bonded: cysteine 120-cysteine 202, cysteine 164-cysteine 186, and cysteine 166-cysteine 169. Histidine 145 lines the Zn(2+) pocket. Glutamate 146 is a catalytic residue. Histidine 149 and histidine 155 together coordinate Zn(2+). Residue asparagine 185 is glycosylated (N-linked (GlcNAc...) asparagine). Residues cysteine 202, asparagine 205, valine 217, asparagine 220, leucine 222, glutamate 224, glutamate 227, and aspartate 230 each contribute to the Ca(2+) site. A Disintegrin domain is found at 215–301 (PPVCGNELLE…DCPTDDLQRN (87 aa)). Cystine bridges form between cysteine 218-cysteine 247, cysteine 229-cysteine 242, cysteine 231-cysteine 237, cysteine 241-cysteine 264, cysteine 255-cysteine 261, cysteine 260-cysteine 286, cysteine 273-cysteine 293, cysteine 280-cysteine 312, cysteine 305-cysteine 317, cysteine 324-cysteine 374, cysteine 339-cysteine 385, cysteine 352-cysteine 362, cysteine 369-cysteine 411, and cysteine 405-cysteine 417. Positions 279–281 (DCD) match the D/ECD-tripeptide motif. Residues aspartate 281, glutamate 284, and aspartate 296 each coordinate Ca(2+). Asparagine 331 carries N-linked (GlcNAc...) asparagine glycosylation.

Belongs to the venom metalloproteinase (M12B) family. P-III subfamily. P-IIIa sub-subfamily. As to quaternary structure, monomer. Zn(2+) serves as cofactor. In terms of processing, glycosylated. In terms of tissue distribution, expressed by the venom gland.

The protein localises to the secreted. With respect to regulation, its proteolytic activity is inhibited by EDTA, TPEN, 1,10-phenanthroline, and some thiol compounds, but is enhanced by alkaline earth metal ions (Mg2+, Ca2+, Sr2+, and Ba2+). Its activity is not modulated by urea (4 M). In terms of biological role, non-hemorrhagic metalloproteinase that degrades fibrinogen. The alpha chain (FGA) is rapidly degraded, the beta chain (FGB) is degraded very slowly, while the gamma chain is left intact. Shows a prefential cleavage at X-Leu bonds. Cleaves insulin B chain at '29-His-|-Leu-30', '33-Ser-|-His-34', '38-Ala-|-Leu-39' and '40-Tyr-|-Leu-41' bonds. This is Zinc metalloproteinase-disintegrin-like brevilysin H2a from Gloydius brevicauda (Korean slamosa snake).